The sequence spans 623 residues: Heterogeneous nuclear ribonucleoprotein Q (623 aa).

Residue A2 is modified to N-acetylalanine. S159 bears the Phosphoserine mark. 3 RRM domains span residues 162–241, 243–325, and 338–408; these read TEIF…ISVA, NRLF…WADP, and KVLF…FAKP. A Glycyl lysine isopeptide (Lys-Gly) (interchain with G-Cter in SUMO2) cross-link involves residue K168. An N6-acetyllysine modification is found at K221. K363 carries the N6-acetyllysine modification. Y373 bears the Phosphotyrosine mark. The segment at 400–561 is interaction with APOBEC1; the sequence is NIEIVFAKPP…GARGGRGGNV (162 aa). R444 is modified (asymmetric dimethylarginine; by PRMT1; alternate). An Omega-N-methylarginine; by PRMT1; alternate modification is found at R444. Repeat copies occupy residues 448-450, 451-453, 460-464, 469-472, 478-480, and 485-488. The tract at residues 448 to 559 is 8 X 3 AA repeats of R-G-G; it reads RGGRGGYGYP…VRGARGGRGG (112 aa). Positions 460–488 are 3 X 4 AA repeats of Y-Y-G-Y; it reads YYGYEDYYDYYGYDYHNYRGGYEDPYYGY. R496 is subject to Omega-N-methylarginine; by PRMT1. The interval 497-623 is disordered; that stretch reads GRGGRGARGA…YQDTFGQQWK (127 aa). Residues 498–500 form a 1-4 repeat; it reads RGG. Low complexity predominate over residues 504–522; it reads RGAAPSRGRGAAPPRGRAG. Position 510 is an asymmetric dimethylarginine; by PRMT1 (R510). Asymmetric dimethylarginine; by PRMT1; alternate is present on R518. R518 carries the post-translational modification Omega-N-methylarginine; by PRMT1; alternate. Residues 518–549 are interaction with SMN; the sequence is RGRAGYSQRGGPGSARGVRGARGGAQQQRGRG. At R526 the chain carries Asymmetric dimethylarginine; alternate. At R526 the chain carries Omega-N-methylarginine; alternate. The 1-5 repeat unit spans residues 526–528; that stretch reads RGG. R536 and R539 each carry asymmetric dimethylarginine; by PRMT1; alternate. R536 and R539 each carry omega-N-methylarginine; by PRMT1; alternate. 3 consecutive repeat copies span residues 539–541, 554–556, and 557–559. Over residues 550-562 the composition is skewed to gly residues; that stretch reads VRGARGGRGGNVG. A Bipartite nuclear localization signal motif is present at residues 564 to 578; it reads KRKADGYNQPDTKRR. Residues 580 to 595 show a composition bias toward polar residues; that stretch reads TNNQNWGSQPIAQQPL. S587 carries the phosphoserine modification. K607 participates in a covalent cross-link: Glycyl lysine isopeptide (Lys-Gly) (interchain with G-Cter in SUMO2). The segment covering 611–623 has biased composition (polar residues); the sequence is QEFYQDTFGQQWK.

Identified in the spliceosome C complex. Component of the coding region determinant (CRD)-mediated complex, composed of DHX9, HNRNPU, IGF2BP1, SYNCRIP and YBX1. Identified in a mRNP complex, at least composed of DHX9, DDX3X, ELAVL1, HNRNPU, IGF2BP1, ILF3, PABPC1, PCBP2, PTBP2, STAU1, STAU2, SYNCRIP and YBX1. Identified in a mRNP granule complex, at least composed of ACTB, ACTN4, DHX9, ERG, HNRNPA1, HNRNPA2B1, HNRNPAB, HNRNPD, HNRNPL, HNRNPR, HNRNPU, HSPA1, HSPA8, IGF2BP1, ILF2, ILF3, NCBP1, NCL, PABPC1, PABPC4, PABPN1, RPLP0, RPS3, RPS3A, RPS4X, RPS8, RPS9, SYNCRIP, YBX1 and untranslated mRNAs. Interacts with GTPBP1. Isoform 1 is a component of the APOB mRNA editosome complex. Isoform 1 interacts with APOBEC1 and A1CF. Part of a complex associated with the FOS mCRD domain and consisting of PABPC1, PAIP1, CSDE1/UNR, HNRPD and SYNCRIP. Isoform 2 interacts with HNRPR. Interacts with POLR2A hyperphosphorylated C-terminal domain. Interacts with HABP4. Identified in a histone pre-mRNA complex, at least composed of ERI1, LSM11, SLBP, SNRPB, SYNCRIP and YBX1. Isoform 1 and isoform 2 interact with SMN. Isoform 2 interacts through its C-terminal domain with SYT7, SYT8 and SYT9. The non-phosphorylated and phosphorylated forms are colocalized with PAIP1 in polysomes. In terms of processing, phosphorylated on tyrosine. The membrane-bound form found in microsomes is phosphorylated in vitro by insulin receptor tyrosine kinase (INSR). Phosphorylation is inhibited upon binding to RNA, whereas the cytoplasmic form is poorly phosphorylated. In terms of tissue distribution, ubiquitous. Detected in heart, brain, spleen, lung, liver, skeletal muscle, adipocytes, kidney and testis.

It is found in the nucleus. The protein localises to the nucleoplasm. It localises to the microsome. Its subcellular location is the cytoplasm. Its function is as follows. Heterogeneous nuclear ribonucleoprotein (hnRNP) implicated in mRNA processing mechanisms. Component of the CRD-mediated complex that promotes MYC mRNA stability. Isoform 1 and isoform 2 are associated in vitro with pre-mRNA, splicing intermediates and mature mRNA protein complexes. Isoform 1 binds to apoB mRNA AU-rich sequences. Isoform 1 is part of the APOB mRNA editosome complex and may modulate the postranscriptional C to U RNA-editing of the APOB mRNA through either by binding to A1CF (APOBEC1 complementation factor), to APOBEC1 or to RNA itself. May be involved in translationally coupled mRNA turnover. Implicated with other RNA-binding proteins in the cytoplasmic deadenylation/translational and decay interplay of the FOS mRNA mediated by the major coding-region determinant of instability (mCRD) domain. Interacts in vitro preferentially with poly(A) and poly(U) RNA sequences. Isoform 2 may be involved in cytoplasmic vesicle-based mRNA transport through interaction with synaptotagmins. The polypeptide is Heterogeneous nuclear ribonucleoprotein Q (Syncrip) (Mus musculus (Mouse)).